A 450-amino-acid polypeptide reads, in one-letter code: MRECISIHVGQAGVQIGNACWELYCLEHGIQPDGQMPSDKTIGGGDDSFNTFFSETGAGKHVPRAVFVDLEPTVVDEVRTGTYRQLFHPEQLITGKEDAANNYARGHYTIGKEIVDLVLDRIRKLADLCTGLQGFLIFHSFGGGTGSGFASLLMERLSVDYGKKSKLEFAIYPAPQVSTAVVEPYNSILTTHTTLEHSDCAFMVDNEAIYDICRRNLDIERPTYTNLNRLIGQIVSSITASLRFDGALNVDLTEFQTNLVPYPRIHFPLATYAPVISAEKAYHEQLSVAEITNACFEPANQMVKCDPRHGKYMACCMLYRGDVVPKDVNAAIATIKTKRTIQFVDWCPTGFKVGINYQPPTVVPGGDLAKVQRAVCMLSNTTAIAEAWARLDHKFDLMYAKRAFVHWYVGEGMEEGEFSEAREDLAALEKDYEEVGVDSVEAEAEEGEEY.

An MREC motif motif is present at residues 1-4 (MREC). Position 11 (glutamine 11) interacts with GTP. Lysine 40 is modified (N6-acetyllysine). Residues glutamate 71, serine 140, glycine 144, threonine 145, threonine 179, asparagine 206, and asparagine 228 each coordinate GTP. Residue glutamate 71 coordinates Mg(2+). Glutamate 254 is an active-site residue. Residue tyrosine 282 is modified to 3'-nitrotyrosine. Residue serine 439 is modified to Phosphoserine. Tyrosine 450 is subject to 3'-nitrotyrosine.

It belongs to the tubulin family. As to quaternary structure, dimer of alpha and beta chains. A typical microtubule is a hollow water-filled tube with an outer diameter of 25 nm and an inner diameter of 15 nM. Alpha-beta heterodimers associate head-to-tail to form protofilaments running lengthwise along the microtubule wall with the beta-tubulin subunit facing the microtubule plus end conferring a structural polarity. Microtubules usually have 13 protofilaments but different protofilament numbers can be found in some organisms and specialized cells. Requires Mg(2+) as cofactor. In terms of processing, some glutamate residues at the C-terminus are polyglutamylated, resulting in polyglutamate chains on the gamma-carboxyl group. Polyglutamylation plays a key role in microtubule severing by spastin (SPAST). SPAST preferentially recognizes and acts on microtubules decorated with short polyglutamate tails: severing activity by SPAST increases as the number of glutamates per tubulin rises from one to eight, but decreases beyond this glutamylation threshold. Glutamylation is also involved in cilia motility. Post-translationally, some glutamate residues at the C-terminus are monoglycylated but not polyglycylated due to the absence of functional TTLL10 in human. Monoglycylation is mainly limited to tubulin incorporated into cilia and flagella axonemes, which is required for their stability and maintenance. Flagella glycylation controls sperm motility. Both polyglutamylation and monoglycylation can coexist on the same protein on adjacent residues, and lowering glycylation levels increases polyglutamylation, and reciprocally. Acetylation of alpha chains at Lys-40 is located inside the microtubule lumen. This modification has been correlated with increased microtubule stability, intracellular transport and ciliary assembly. In terms of processing, methylation of alpha chains at Lys-40 is found in mitotic microtubules and is required for normal mitosis and cytokinesis contributing to genomic stability. Post-translationally, nitration of Tyr-450 is irreversible and interferes with normal dynein intracellular distribution. Undergoes a tyrosination/detyrosination cycle, the cyclic removal and re-addition of a C-terminal tyrosine residue by the enzymes tubulin tyrosine carboxypeptidase (MATCAP1/KIAA0895L, VASH1 or VASH2) and tubulin tyrosine ligase (TTL), respectively. In terms of processing, tyrosination promotes microtubule interaction with CAP-Gly domain-containing proteins such as CLIP1, CLIP2 and DCTN1. Tyrosination regulates the initiation of dynein-dynactin motility via interaction with DCTN1, which brings the dynein-dynactin complex into contact with microtubules. In neurons, tyrosinated tubulins mediate the initiation of retrograde vesicle transport. Post-translationally, detyrosination is involved in metaphase plate congression by guiding chromosomes during mitosis: detyrosination promotes interaction with CENPE, promoting pole-proximal transport of chromosomes toward the equator. Detyrosination increases microtubules-dependent mechanotransduction in dystrophic cardiac and skeletal muscle. In cardiomyocytes, detyrosinated microtubules are required to resist to contractile compression during contraction: detyrosination promotes association with desmin (DES) at force-generating sarcomeres, leading to buckled microtubules and mechanical resistance to contraction. In terms of tissue distribution, expressed in testis.

Its subcellular location is the cytoplasm. The protein resides in the cytoskeleton. It carries out the reaction GTP + H2O = GDP + phosphate + H(+). Functionally, tubulin is the major constituent of microtubules, a cylinder consisting of laterally associated linear protofilaments composed of alpha- and beta-tubulin heterodimers. Microtubules grow by the addition of GTP-tubulin dimers to the microtubule end, where a stabilizing cap forms. Below the cap, tubulin dimers are in GDP-bound state, owing to GTPase activity of alpha-tubulin. The chain is Tubulin alpha-3C chain (TUBA3C) from Homo sapiens (Human).